Here is a 102-residue protein sequence, read N- to C-terminus: ATP-dependent Clp protease adapter protein ClpS (102 aa).

The protein belongs to the ClpS family. Binds to the N-terminal domain of the chaperone ClpA.

Its function is as follows. Involved in the modulation of the specificity of the ClpAP-mediated ATP-dependent protein degradation. In Herminiimonas arsenicoxydans, this protein is ATP-dependent Clp protease adapter protein ClpS.